The following is a 163-amino-acid chain: MSHLNLATLDTSQHPYLPASSQTLFAAKAKRKFTFEDISKQIGRNEVATAAIFYGQAKASAEDIANLAKVLDIPLKLLEEQLSGFPDRGRSVEMPPKEPLIYRLYEIVQNYGYAYKAVLNEKFGDGIMSAISFSTKVEKETDADGNNWAVITLRGKWLPFSRF.

Catalysis depends on residues arginine 103, glutamate 106, and serine 129.

The protein belongs to the cyanase family.

It catalyses the reaction cyanate + hydrogencarbonate + 3 H(+) = NH4(+) + 2 CO2. In terms of biological role, catalyzes the reaction of cyanate with bicarbonate to produce ammonia and carbon dioxide. This Talaromyces stipitatus (strain ATCC 10500 / CBS 375.48 / QM 6759 / NRRL 1006) (Penicillium stipitatum) protein is Cyanate hydratase.